We begin with the raw amino-acid sequence, 62 residues long: Large ribosomal subunit protein bL28 (62 aa).

It belongs to the bacterial ribosomal protein bL28 family.

The sequence is that of Large ribosomal subunit protein bL28 from Acetivibrio thermocellus (strain ATCC 27405 / DSM 1237 / JCM 9322 / NBRC 103400 / NCIMB 10682 / NRRL B-4536 / VPI 7372) (Clostridium thermocellum).